The chain runs to 190 residues: 6,7-dimethyl-8-ribityllumazine synthase (190 aa).

5-amino-6-(D-ribitylamino)uracil contacts are provided by residues Phe-23, 61-63 (SFE), and 85-87 (AVI). 90-91 (QT) contacts (2S)-2-hydroxy-3-oxobutyl phosphate. His-93 (proton donor) is an active-site residue. Phe-118 lines the 5-amino-6-(D-ribitylamino)uracil pocket. Arg-132 lines the (2S)-2-hydroxy-3-oxobutyl phosphate pocket.

This sequence belongs to the DMRL synthase family.

The catalysed reaction is (2S)-2-hydroxy-3-oxobutyl phosphate + 5-amino-6-(D-ribitylamino)uracil = 6,7-dimethyl-8-(1-D-ribityl)lumazine + phosphate + 2 H2O + H(+). It participates in cofactor biosynthesis; riboflavin biosynthesis; riboflavin from 2-hydroxy-3-oxobutyl phosphate and 5-amino-6-(D-ribitylamino)uracil: step 1/2. Catalyzes the formation of 6,7-dimethyl-8-ribityllumazine by condensation of 5-amino-6-(D-ribitylamino)uracil with 3,4-dihydroxy-2-butanone 4-phosphate. This is the penultimate step in the biosynthesis of riboflavin. The sequence is that of 6,7-dimethyl-8-ribityllumazine synthase from Nostoc sp. (strain PCC 7120 / SAG 25.82 / UTEX 2576).